We begin with the raw amino-acid sequence, 463 residues long: Histone acetyltransferase mst1 (463 aa).

In terms of domain architecture, Tudor-knot spans 22–74 (VYKSKVFAFKDGEYRKAEILMIQKRTRGVVYYVHYNDYNKRLDEWITIDNIDL). Positions 76–145 (KGIEYPPPEK…GSNAGNESLP (70 aa)) are disordered. The segment covering 87–99 (KKAHGKGKSSKRP) has biased composition (basic residues). Low complexity predominate over residues 111–121 (PSKTEPSTPST). Positions 179–451 (ARIRNINKIC…NGDLLADWQP (273 aa)) constitute an MYST-type HAT domain. Residues 212–237 (VYICSFCFCYYGSERQFQRHREKCTL) form a C2HC MYST-type zinc finger. The ESA1-RPD3 motif motif lies at 262–283 (RTWCRNICLLSKLFLDHKMLYY). Lys-279 is modified (N6-acetyllysine; by autocatalysis). Acetyl-CoA is bound by residues 320-324 (ACILT) and 329-335 (QRHGYGK). The active-site Proton donor/acceptor is the Glu-355. Residue Ser-359 coordinates acetyl-CoA.

This sequence belongs to the MYST (SAS/MOZ) family. Component of the NuA4 histone acetyltransferase complex. Interacts with arp4. Post-translationally, autoacetylation at Lys-279 is required for proper function.

It is found in the nucleus. It localises to the chromosome. It carries out the reaction L-lysyl-[histone] + acetyl-CoA = N(6)-acetyl-L-lysyl-[histone] + CoA + H(+). The enzyme catalyses L-lysyl-[protein] + acetyl-CoA = N(6)-acetyl-L-lysyl-[protein] + CoA + H(+). It catalyses the reaction 2-hydroxyisobutanoyl-CoA + L-lysyl-[protein] = N(6)-(2-hydroxyisobutanoyl)-L-lysyl-[protein] + CoA + H(+). The catalysed reaction is (2E)-butenoyl-CoA + L-lysyl-[protein] = N(6)-(2E)-butenoyl-L-lysyl-[protein] + CoA + H(+). In terms of biological role, catalytic component of the NuA4 histone acetyltransferase (HAT) complex which is involved in epigenetic transcriptional activation of selected genes principally by acetylation of nucleosomal histones H4, H3, H2B, H2A and H2A variant H2A.Z. Acetylates histone H4 to form H4K5ac, H4K8ac, H4K12ac and H4K16ac, histone H3 to form H3K14ac, and histone H2A to form H2AK4ac and H2AK7ac. The NuA4 complex is involved in the DNA damage response and is required for chromosome segregation. The NuA4 complex plays a direct role in repair of DNA double-strand breaks (DSBs) through homologous recombination. Recruitment to promoters depends on H3K4me. Also acetylates non-histone proteins. In addition to protein acetyltransferase, can use different acyl-CoA substrates, such as 2-hydroxyisobutanoyl-CoA (2-hydroxyisobutyryl-CoA) or (2E)-butenoyl-CoA (crotonyl-CoA), and is able to mediate protein 2-hydroxyisobutyrylation and crotonylation, respectively. The polypeptide is Histone acetyltransferase mst1 (Schizosaccharomyces pombe (strain 972 / ATCC 24843) (Fission yeast)).